The primary structure comprises 250 residues: Small ribosomal subunit protein uS3 (250 aa).

In terms of domain architecture, KH type-2 spans 39–107; that stretch reads VREFLTKKLK…PAQVSINEID (69 aa). The interval 214–250 is disordered; that stretch reads VMNPAPQEERPAKRGRGRGEGQERRGRRSDRAADKGE. A compositionally biased stretch (basic and acidic residues) spans 220–250; that stretch reads QEERPAKRGRGRGEGQERRGRRSDRAADKGE.

It belongs to the universal ribosomal protein uS3 family. Part of the 30S ribosomal subunit. Forms a tight complex with proteins S10 and S14.

Functionally, binds the lower part of the 30S subunit head. Binds mRNA in the 70S ribosome, positioning it for translation. This Acinetobacter baylyi (strain ATCC 33305 / BD413 / ADP1) protein is Small ribosomal subunit protein uS3.